The primary structure comprises 233 residues: 2-phytyl-1,4-naphtoquinone methyltransferase (233 aa).

Belongs to the class I-like SAM-binding methyltransferase superfamily. MenG/UbiE family.

It carries out the reaction demethylphylloquinol + S-adenosyl-L-methionine = phylloquinol + S-adenosyl-L-homocysteine + H(+). It functions in the pathway cofactor biosynthesis; phylloquinone biosynthesis. Its function is as follows. Methyltransferase required for the conversion of 2-phytyl-1,4-beta-naphthoquinol to phylloquinol. In Synechococcus elongatus (strain ATCC 33912 / PCC 7942 / FACHB-805) (Anacystis nidulans R2), this protein is 2-phytyl-1,4-naphtoquinone methyltransferase.